The primary structure comprises 194 residues: Histone H1.0-A (194 aa).

Disordered regions lie at residues 1–29 (MTENSAPAAKPRRSKASKKSTDHPKYSDM) and 96–194 (ADEV…GRKK). One can recognise an H15 domain in the interval 22–95 (DHPKYSDMIL…GASGSFRLAK (74 aa)). Composition is skewed to basic residues over residues 102–164 (PAKK…KTVR) and 172–194 (KAKKAKPSKPKAKASPKKSGRKK).

Belongs to the histone H1/H5 family.

The protein localises to the nucleus. Its subcellular location is the chromosome. Histones H1 are necessary for the condensation of nucleosome chains into higher-order structures. The histones H1.0 are found in cells that are in terminal stages of differentiation or that have low rates of cell division. This Xenopus laevis (African clawed frog) protein is Histone H1.0-A (h1-0-a).